A 417-amino-acid polypeptide reads, in one-letter code: Serine--tRNA ligase (417 aa).

Residue 232–234 (TSE) participates in L-serine binding. An ATP-binding site is contributed by 263 to 265 (RKE). Glutamate 286 contributes to the L-serine binding site. 350–353 (EISS) contributes to the ATP binding site. Serine 385 serves as a coordination point for L-serine.

Belongs to the class-II aminoacyl-tRNA synthetase family. Type-1 seryl-tRNA synthetase subfamily. Homodimer. The tRNA molecule binds across the dimer.

Its subcellular location is the cytoplasm. The catalysed reaction is tRNA(Ser) + L-serine + ATP = L-seryl-tRNA(Ser) + AMP + diphosphate + H(+). The enzyme catalyses tRNA(Sec) + L-serine + ATP = L-seryl-tRNA(Sec) + AMP + diphosphate + H(+). It participates in aminoacyl-tRNA biosynthesis; selenocysteinyl-tRNA(Sec) biosynthesis; L-seryl-tRNA(Sec) from L-serine and tRNA(Sec): step 1/1. Functionally, catalyzes the attachment of serine to tRNA(Ser). Is also able to aminoacylate tRNA(Sec) with serine, to form the misacylated tRNA L-seryl-tRNA(Sec), which will be further converted into selenocysteinyl-tRNA(Sec). This is Serine--tRNA ligase from Campylobacter hominis (strain ATCC BAA-381 / DSM 21671 / CCUG 45161 / LMG 19568 / NCTC 13146 / CH001A).